We begin with the raw amino-acid sequence, 216 residues long: Peptide deformylase (216 aa).

Residues C134 and H178 each contribute to the Fe cation site. E179 is a catalytic residue. H182 serves as a coordination point for Fe cation.

This sequence belongs to the polypeptide deformylase family. It depends on Fe(2+) as a cofactor.

The catalysed reaction is N-terminal N-formyl-L-methionyl-[peptide] + H2O = N-terminal L-methionyl-[peptide] + formate. In terms of biological role, removes the formyl group from the N-terminal Met of newly synthesized proteins. Requires at least a dipeptide for an efficient rate of reaction. N-terminal L-methionine is a prerequisite for activity but the enzyme has broad specificity at other positions. The sequence is that of Peptide deformylase from Mycoplasma pneumoniae (strain ATCC 29342 / M129 / Subtype 1) (Mycoplasmoides pneumoniae).